A 202-amino-acid polypeptide reads, in one-letter code: Ribonuclease HII (202 aa).

Residues Leu14 to Ala202 form the RNase H type-2 domain. A divalent metal cation is bound by residues Asp20, Glu21, and Asp111.

This sequence belongs to the RNase HII family. Requires Mn(2+) as cofactor. Mg(2+) serves as cofactor.

The protein localises to the cytoplasm. It catalyses the reaction Endonucleolytic cleavage to 5'-phosphomonoester.. Its function is as follows. Endonuclease that specifically degrades the RNA of RNA-DNA hybrids. This Rhizorhabdus wittichii (strain DSM 6014 / CCUG 31198 / JCM 15750 / NBRC 105917 / EY 4224 / RW1) (Sphingomonas wittichii) protein is Ribonuclease HII.